A 258-amino-acid chain; its full sequence is Acetylglutamate kinase (258 aa).

Substrate-binding positions include 44–45 (GG), Arg-66, and Asn-158. ATP-binding positions include 181–186 (DVSGIL) and 209–211 (IIT).

The protein belongs to the acetylglutamate kinase family. ArgB subfamily. As to quaternary structure, homodimer.

It is found in the cytoplasm. It catalyses the reaction N-acetyl-L-glutamate + ATP = N-acetyl-L-glutamyl 5-phosphate + ADP. Its pathway is amino-acid biosynthesis; L-arginine biosynthesis; N(2)-acetyl-L-ornithine from L-glutamate: step 2/4. In terms of biological role, catalyzes the ATP-dependent phosphorylation of N-acetyl-L-glutamate. The chain is Acetylglutamate kinase from Yersinia pestis bv. Antiqua (strain Antiqua).